Here is a 411-residue protein sequence, read N- to C-terminus: 1-deoxy-D-xylulose 5-phosphate reductoisomerase (411 aa).

Residues T12, G13, S14, I15, and N127 each contribute to the NADPH site. A 1-deoxy-D-xylulose 5-phosphate-binding site is contributed by K128. E129 contacts NADPH. D153 contacts Mn(2+). 1-deoxy-D-xylulose 5-phosphate is bound by residues S154, E155, S189, and H212. Mn(2+) is bound at residue E155. G218 contacts NADPH. Residues S225, N230, K231, and E234 each coordinate 1-deoxy-D-xylulose 5-phosphate. E234 is a Mn(2+) binding site.

The protein belongs to the DXR family. Requires Mg(2+) as cofactor. It depends on Mn(2+) as a cofactor.

It carries out the reaction 2-C-methyl-D-erythritol 4-phosphate + NADP(+) = 1-deoxy-D-xylulose 5-phosphate + NADPH + H(+). Its pathway is isoprenoid biosynthesis; isopentenyl diphosphate biosynthesis via DXP pathway; isopentenyl diphosphate from 1-deoxy-D-xylulose 5-phosphate: step 1/6. Functionally, catalyzes the NADPH-dependent rearrangement and reduction of 1-deoxy-D-xylulose-5-phosphate (DXP) to 2-C-methyl-D-erythritol 4-phosphate (MEP). The sequence is that of 1-deoxy-D-xylulose 5-phosphate reductoisomerase from Colwellia psychrerythraea (strain 34H / ATCC BAA-681) (Vibrio psychroerythus).